The chain runs to 211 residues: Large ribosomal subunit protein uL3 (211 aa).

Gln150 carries the N5-methylglutamine modification.

It belongs to the universal ribosomal protein uL3 family. In terms of assembly, part of the 50S ribosomal subunit. Forms a cluster with proteins L14 and L19. Methylated by PrmB.

Functionally, one of the primary rRNA binding proteins, it binds directly near the 3'-end of the 23S rRNA, where it nucleates assembly of the 50S subunit. This Stutzerimonas stutzeri (strain A1501) (Pseudomonas stutzeri) protein is Large ribosomal subunit protein uL3.